A 154-amino-acid chain; its full sequence is MKLNELRDHEGATKNRKRIGRGIGSGTGKTGGCGVKGQKSRSGVSLNGFEGGQMPIYRRLPKRGFKNLFAKTYNEVSLGRIQLAVDAGKLNIEKSVDVAALKDAGIIRRFKNGVRLLSDGELKSKIVFNISGASKVARTKIEKVGGQINVPESI.

A compositionally biased stretch (basic and acidic residues) spans 1–13 (MKLNELRDHEGAT). The disordered stretch occupies residues 1–44 (MKLNELRDHEGATKNRKRIGRGIGSGTGKTGGCGVKGQKSRSGV). The span at 21 to 35 (RGIGSGTGKTGGCGV) shows a compositional bias: gly residues.

It belongs to the universal ribosomal protein uL15 family. Part of the 50S ribosomal subunit.

In terms of biological role, binds to the 23S rRNA. The chain is Large ribosomal subunit protein uL15 from Bartonella bacilliformis (strain ATCC 35685 / KC583 / Herrer 020/F12,63).